The chain runs to 725 residues: 1,4-alpha-glucan branching enzyme GlgB (725 aa).

The active-site Nucleophile is Asp406. Glu459 (proton donor) is an active-site residue.

It belongs to the glycosyl hydrolase 13 family. GlgB subfamily. In terms of assembly, monomer.

It catalyses the reaction Transfers a segment of a (1-&gt;4)-alpha-D-glucan chain to a primary hydroxy group in a similar glucan chain.. It functions in the pathway glycan biosynthesis; glycogen biosynthesis. Its function is as follows. Catalyzes the formation of the alpha-1,6-glucosidic linkages in glycogen by scission of a 1,4-alpha-linked oligosaccharide from growing alpha-1,4-glucan chains and the subsequent attachment of the oligosaccharide to the alpha-1,6 position. The polypeptide is 1,4-alpha-glucan branching enzyme GlgB (Methylobacillus flagellatus (strain ATCC 51484 / DSM 6875 / VKM B-1610 / KT)).